Consider the following 347-residue polypeptide: MKNILDFTLEELKEWMKENGENAFRAKQIFDWIYKKEVFNFEEMKNISKALIGKLSENFYIGIPEVIDYLSSSEDGTRKILLGLGDGNIIECVIMKYKYGNSICVSTQIGCRMGCKFCASTLEGMVRNLTAGEILSEVLIGQKLLGERISNIVLMGSGEPLDNYDNVMKFLEIVNADYGLNIGQRHITLSTCGLVPKIREMADKEMQVTLAISLHAVSDEKRKTIMPIANKYSISEILDACNYYIEKTGRRITFEYSLVSGVNDTKEDAKSLGRLLKGMLCHVNLIPVNEIKENEFKKSTKKDIETFLNTLKTYGVEATVRREMGSDINAACGQLRRSYIKSKGLKL.

Glu91 functions as the Proton acceptor in the catalytic mechanism. Positions 97–327 (YKYGNSICVS…ATVRREMGSD (231 aa)) constitute a Radical SAM core domain. A disulfide bridge links Cys104 with Cys332. [4Fe-4S] cluster-binding residues include Cys111, Cys115, and Cys118. Residues 158–159 (GE), Ser190, 213–215 (SLH), and Asn289 each bind S-adenosyl-L-methionine. Cys332 acts as the S-methylcysteine intermediate in catalysis.

This sequence belongs to the radical SAM superfamily. RlmN family. It depends on [4Fe-4S] cluster as a cofactor.

It localises to the cytoplasm. The catalysed reaction is adenosine(2503) in 23S rRNA + 2 reduced [2Fe-2S]-[ferredoxin] + 2 S-adenosyl-L-methionine = 2-methyladenosine(2503) in 23S rRNA + 5'-deoxyadenosine + L-methionine + 2 oxidized [2Fe-2S]-[ferredoxin] + S-adenosyl-L-homocysteine. It carries out the reaction adenosine(37) in tRNA + 2 reduced [2Fe-2S]-[ferredoxin] + 2 S-adenosyl-L-methionine = 2-methyladenosine(37) in tRNA + 5'-deoxyadenosine + L-methionine + 2 oxidized [2Fe-2S]-[ferredoxin] + S-adenosyl-L-homocysteine. Specifically methylates position 2 of adenine 2503 in 23S rRNA and position 2 of adenine 37 in tRNAs. The sequence is that of Probable dual-specificity RNA methyltransferase RlmN from Clostridium perfringens (strain SM101 / Type A).